A 386-amino-acid chain; its full sequence is Succinate--CoA ligase [ADP-forming] subunit beta (386 aa).

Residues 9-244 enclose the ATP-grasp domain; the sequence is KELLREFGVA…TTEEDPREVE (236 aa). ATP contacts are provided by residues Lys46, 53–55, Glu99, Ser102, and Glu107; that span reads GRG. Asn199 and Asp213 together coordinate Mg(2+). Substrate is bound by residues Asn264 and 321–323; that span reads GIM.

The protein belongs to the succinate/malate CoA ligase beta subunit family. Heterotetramer of two alpha and two beta subunits. Requires Mg(2+) as cofactor.

The catalysed reaction is succinate + ATP + CoA = succinyl-CoA + ADP + phosphate. It catalyses the reaction GTP + succinate + CoA = succinyl-CoA + GDP + phosphate. Its pathway is carbohydrate metabolism; tricarboxylic acid cycle; succinate from succinyl-CoA (ligase route): step 1/1. Functionally, succinyl-CoA synthetase functions in the citric acid cycle (TCA), coupling the hydrolysis of succinyl-CoA to the synthesis of either ATP or GTP and thus represents the only step of substrate-level phosphorylation in the TCA. The beta subunit provides nucleotide specificity of the enzyme and binds the substrate succinate, while the binding sites for coenzyme A and phosphate are found in the alpha subunit. This Exiguobacterium sp. (strain ATCC BAA-1283 / AT1b) protein is Succinate--CoA ligase [ADP-forming] subunit beta.